We begin with the raw amino-acid sequence, 625 residues long: Thrombopoietin receptor (625 aa).

The signal sequence occupies residues 1–25; it reads MPSWALFMVTSCLLLALPNQAQVTS. Topologically, residues 26–482 are extracellular; it reads QDVFLLALGT…RVSTGSETAW (457 aa). The N-linked (GlcNAc...) asparagine glycan is linked to Asn-117. Fibronectin type-III domains lie at 178-270 and 383-479; these read NATA…PVTV and PTPS…TGSE. The short motif at 465-469 is the WSXWS motif element; sequence WSAWS. The chain crosses the membrane as a helical span at residues 483 to 504; it reads ITLVTALLLVLSLSALLGLLLL. Over 505 to 625 the chain is Cytoplasmic; it reads KWQFPAHYRR…YLPLSYWQQP (121 aa). Positions 519-527 match the Box 1 motif motif; it reads LWPSLPDLH. Residues Lys-544 and Lys-564 each participate in a glycyl lysine isopeptide (Lys-Gly) (interchain with G-Cter in ubiquitin) cross-link. 2 positions are modified to phosphotyrosine: Tyr-616 and Tyr-621.

Belongs to the type I cytokine receptor family. Type 1 subfamily. Homodimer. Interacts with ATXN2L. Interacts with JAK2 and TYK2; these interactions increase MPL localization to the cell membrane. Interacts with THPO. Interacts with SHIP/INPP5D. Interacts with kinases BTK and SYK. In terms of processing, ubiquitination at Lys-544 and Lys-564 targets MPL for degradation by both the lysosomal and proteasomal pathways. The E3 ubiquitin-protein ligase CBL significantly contributes to this ubiquitination.

The protein localises to the cell membrane. It localises to the golgi apparatus. It is found in the cell surface. Its function is as follows. Receptor for thrombopoietin that regulates hematopoietic stem cell renewal, megakaryocyte differentiation, and platelet formation. Upon activation by THPO, induces rapid tyrosine phosphorylation and activation of JAK2, providing docking sites for many signaling proteins such as STAT5, SHIP/INPP5D, GRB2, SOS1 and PI3K. In turn, These signaling cascades lead to the proliferation, survival, and differentiation of megakaryocytes, ultimately leading to increased platelet production. Functionally, acts as an inhibitor of thrombopoietin signaling by promoting protein down-regulation of full-length isoform Mpl-fl. This is Thrombopoietin receptor (Mpl) from Mus musculus (Mouse).